We begin with the raw amino-acid sequence, 42 residues long: Iota-conotoxin-like R11.16 (42 aa).

4 disulfide bridges follow: Cys-5–Cys-19, Cys-12–Cys-22, Cys-18–Cys-27, and Cys-21–Cys-36.

Belongs to the conotoxin I1 superfamily. In terms of tissue distribution, expressed by the venom duct.

It is found in the secreted. Iota-conotoxins bind to voltage-gated sodium channels (Nav) and act as agonists by shifting the voltage-dependence of activation to more hyperpolarized levels. Produces general excitatory symptoms. The chain is Iota-conotoxin-like R11.16 from Conus radiatus (Rayed cone).